Here is a 90-residue protein sequence, read N- to C-terminus: Probable Fe(2+)-trafficking protein (90 aa).

The protein belongs to the Fe(2+)-trafficking protein family.

Functionally, could be a mediator in iron transactions between iron acquisition and iron-requiring processes, such as synthesis and/or repair of Fe-S clusters in biosynthetic enzymes. The polypeptide is Probable Fe(2+)-trafficking protein (Aeromonas salmonicida (strain A449)).